The sequence spans 400 residues: Diphosphomevalonate decarboxylase (400 aa).

(R)-5-diphosphomevalonate-binding positions include Y19–K22, R75, S154–R159, and T210. Residues D381–K400 are disordered.

Belongs to the diphosphomevalonate decarboxylase family.

It carries out the reaction (R)-5-diphosphomevalonate + ATP = isopentenyl diphosphate + ADP + phosphate + CO2. It functions in the pathway isoprenoid biosynthesis; isopentenyl diphosphate biosynthesis via mevalonate pathway; isopentenyl diphosphate from (R)-mevalonate: step 3/3. Its function is as follows. Diphosphomevalonate decarboxylase; part of the second module of ergosterol biosynthesis pathway that includes the middle steps of the pathway. The second module involves the formation of farnesyl diphosphate, which is also an important intermediate in the biosynthesis of ubiquinone, dolichol, heme and prenylated proteins. This module also plays a key role in the biosynthesis of triterpenes such as ganoderic acids (GA), a group of highly oxygenated lanostane-type triterpenoids which are well recognized as a main group of unique bioactive compounds in the medicinal mushroom Ganoderma lucidum. Activity by the mevalonate kinase first converts mevalonate into 5-phosphomevalonate. 5-phosphomevalonate is then further converted to 5-diphosphomevalonate by the phosphomevalonate kinase. The diphosphomevalonate decarboxylase MVD then produces isopentenyl diphosphate. The isopentenyl-diphosphate delta-isomerase then catalyzes the 1,3-allylic rearrangement of the homoallylic substrate isopentenyl (IPP) to its highly electrophilic allylic isomer, dimethylallyl diphosphate (DMAPP). Finally the farnesyl diphosphate synthase FPS catalyzes the sequential condensation of isopentenyl pyrophosphate with dimethylallyl pyrophosphate, and then with the resultant geranylpyrophosphate to the ultimate product farnesyl pyrophosphate. The protein is Diphosphomevalonate decarboxylase of Ganoderma lucidum (Ling zhi medicinal fungus).